The sequence spans 990 residues: Pentatricopeptide repeat-containing protein At4g33170 (990 aa).

PPR repeat units follow at residues 73–107, 109–139, 144–178, 179–209, 210–244, 279–313, 314–348, 349–379, 380–414, 415–450, 451–477, 481–515, 516–550, 551–581, 582–616, 617–651, 652–682, 683–717, 718–753, and 754–788; these read ERFL…DLVS, NSIL…LRQD, SRMT…GLDG, DEFV…MPYR, DVVL…GLNP, EIIF…DVEC, DQVT…GLDL, MLTV…MSER, DLIS…GLKP, DQYT…NNVS, DSFV…LFER, DLVA…GERS, DDFT…GYDL, DLWV…IPVP, DDVA…GVLP, DEFT…NCTN, DPFV…IEMM, NITA…GIKP, DKVT…GIKP, and EIEH…ASAS. The type E motif stretch occupies residues 789 to 864; it reads MYRTLLAACR…DPGFSWIEVK (76 aa). The segment at 865–895 is type E(+) motif; the sequence is NKIHIFVVDDRSNRQTELIYRKVKDMIRDIK. The interval 896–990 is type DYW motif; that stretch reads QEGYVPETDF…DGICSCGDYW (95 aa).

The protein belongs to the PPR family. PCMP-H subfamily.

In Arabidopsis thaliana (Mouse-ear cress), this protein is Pentatricopeptide repeat-containing protein At4g33170 (PCMP-H53).